Here is a 101-residue protein sequence, read N- to C-terminus: DNA-directed RNA polymerase subunit beta (101 aa).

The interval 74–101 (KRRLSALGPGGLSRERAGLEVRDVHSSH) is disordered. The segment covering 86–101 (SRERAGLEVRDVHSSH) has biased composition (basic and acidic residues).

The protein belongs to the RNA polymerase beta chain family. In terms of assembly, the RNAP catalytic core consists of 2 alpha, 1 beta, 1 beta' and 1 omega subunit. When a sigma factor is associated with the core the holoenzyme is formed, which can initiate transcription.

It carries out the reaction RNA(n) + a ribonucleoside 5'-triphosphate = RNA(n+1) + diphosphate. In terms of biological role, DNA-dependent RNA polymerase catalyzes the transcription of DNA into RNA using the four ribonucleoside triphosphates as substrates. In Mycolicibacterium peregrinum (Mycobacterium peregrinum), this protein is DNA-directed RNA polymerase subunit beta (rpoB).